A 626-amino-acid chain; its full sequence is Carnitine O-acetyltransferase (626 aa).

Residue K93 is modified to N6-succinyllysine. K261 is subject to N6-acetyllysine; alternate. K261 is subject to N6-succinyllysine; alternate. Position 268 is an N6-acetyllysine (K268). H343 serves as the catalytic Proton acceptor. Residues K419 and 423-430 contribute to the CoA site; that span reads KSQKLSPD. Positions 452 and 454 each coordinate (R)-carnitine. S456 is a CoA binding site. Position 465 (T465) interacts with (R)-carnitine. Residues R504 and Q555 each coordinate CoA. The short motif at 624 to 626 is the Microbody targeting signal element; that stretch reads AKL.

It belongs to the carnitine/choline acetyltransferase family. Monomer. Expressed in flagella of epididymal sperm.

The protein localises to the endoplasmic reticulum. It is found in the peroxisome. The protein resides in the mitochondrion inner membrane. It carries out the reaction (R)-carnitine + acetyl-CoA = O-acetyl-(R)-carnitine + CoA. It catalyses the reaction propanoyl-CoA + (R)-carnitine = O-propanoyl-(R)-carnitine + CoA. The enzyme catalyses butanoyl-CoA + (R)-carnitine = O-butanoyl-(R)-carnitine + CoA. The catalysed reaction is hexanoyl-CoA + (R)-carnitine = O-hexanoyl-(R)-carnitine + CoA. It carries out the reaction octanoyl-CoA + (R)-carnitine = O-octanoyl-(R)-carnitine + CoA. It catalyses the reaction decanoyl-CoA + (R)-carnitine = O-decanoyl-(R)-carnitine + CoA. The enzyme catalyses 3-methylbutanoyl-CoA + (R)-carnitine = O-3-methylbutanoyl-(R)-carnitine + CoA. The catalysed reaction is 2-methylpropanoyl-CoA + (R)-carnitine = O-isobutanoyl-(R)-carnitine + CoA. It carries out the reaction 2-methylbutanoyl-CoA + (R)-carnitine = O-2-methylbutanoyl-(R)-carnitine + CoA. It catalyses the reaction acetoacetyl-CoA + (R)-carnitine = O-3-oxobutanoyl-(R)-carnitine + CoA. The enzyme catalyses 3-hydroxybutanoyl-CoA + (R)-carnitine = O-3-hydroxybutanoyl-(R)-carnitine + CoA. The catalysed reaction is 4,8-dimethylnonanoyl-CoA + (R)-carnitine = O-4,8-dimethylnonanoyl-(R)-carnitine + CoA. It carries out the reaction 2,6-dimethylheptanoyl-CoA + (R)-carnitine = O-2,6-dimethylheptanoyl-(R)-carnitine + CoA. Its function is as follows. Catalyzes the reversible transfer of acyl groups from carnitine to coenzyme A (CoA) and regulates the acyl-CoA/CoA ratio. Also plays a crucial role in the transport of fatty acids for beta-oxidation. Responsible for the synthesis of short- and branched-chain acylcarnitines. Active towards some branched-chain amino acid oxidation pathway (BCAAO) intermediates. Trans-2-enoyl-CoAs and 2-methylacyl-CoAs are poor substrates. The sequence is that of Carnitine O-acetyltransferase from Rattus norvegicus (Rat).